The following is a 144-amino-acid chain: DHIDLEFDVGQCIQASYTAPTAGRTSVNIVASDGTVVLHVDYRKHSGGKPSTGKPWNQILIINSKLGGSWGTEEKVHDVETTIVYNDYTGCKQDADFSIELNQKDIATYAYRTPVNTVSRVEFGNSGNDAVLRKLCVVYPAPSK.

Residues aspartate 1 to valine 138 enclose the Galectin domain.

In terms of assembly, tetramer.

Its function is as follows. Lectin that binds beta-galactoside and a wide array of complex carbohydrates. This Aplysina lactuca (Marine sponge) protein is Galectin a.